The primary structure comprises 203 residues: Thymidylate kinase (203 aa).

ATP is bound at residue 14–21; sequence GGEGIGKS.

It belongs to the thymidylate kinase family.

It carries out the reaction dTMP + ATP = dTDP + ADP. Functionally, phosphorylation of dTMP to form dTDP in both de novo and salvage pathways of dTTP synthesis. In Rickettsia africae (strain ESF-5), this protein is Thymidylate kinase.